A 490-amino-acid polypeptide reads, in one-letter code: MNGTMDHPDHPDPDSIKMFVGQVPRSWSEKELRELFEQYGAVYEINVLRDRSQNPPQSKGCCFITFYTRKAALEAQNALHNMKVLPGMHHPIQMKPADSEKNNAVEDRKLFVGMVSKKCNENDIRAMFSQFGQIEESRILRGPDGMSRGCAFVTFTTRSMAQMAIKAMHQAQTMEGCSSPIVVKFADTQKDKEQKRMTQQLQQQMQQLNAASMWGNLAGLSSLAPQYLALLQQTASSGNLNSLSGLHPMGGEYATGMTSGLNAMQLQNLAALAAAASAAQNTPSAGSALTTSSSPLSILTSSGSSPSSNNNSAVNPMASLGALQTLAGATAGLNVGSLAGMAALNGGLGSSLSNGTGSTMEALSQAYSGIQQYAAAALPSLYNQSLLSQQGLGAAGSQKEGPEGANLFIYHLPQEFGDQDLLQMFMPFGNVVSAKVFIDKQTNLSKCFGFVSYDNPVSAQAAIQSMNGFQIGMKRLKVQLKRSKNDSKPY.

RRM domains are found at residues 16-99 and 108-188; these read IKMF…PADS and RKLF…FADT. The tract at residues 283 to 312 is disordered; that stretch reads PSAGSALTTSSSPLSILTSSGSSPSSNNNS. In terms of domain architecture, RRM 3 spans 405–483; the sequence is ANLFIYHLPQ…KRLKVQLKRS (79 aa).

Belongs to the CELF/BRUNOL family. As to quaternary structure, oligomer. Oligomerization is required for RNA-binding and EDEN-dependent deadenylation. In terms of processing, phosphorylated during oocyte maturation and dephosphorylated following egg activation. Dephosphorylation is calcium dependent and correlates with the increase in the activity of EDEN-dependent deadenylation.

It is found in the nucleus. The protein resides in the cytoplasm. RNA-binding protein implicated in the regulation of several post-transcriptional events. May be involved in pre-mRNA alternative splicing, mRNA translation activation and stability. Mediates the rapid and sequence-specific cytoplasmic deadenylation of EDEN-containing maternal mRNAs following fertilization. Binds to AU-rich sequences (AREs) of jun mRNA. Binds to the embryonic deadenylation element (EDEN) motif localized in the 3'-UTR of maternal mRNAs. Binds to RNA containing several repeats of the consensus sequence 5'-UGU-3'. EDEN-dependent deadenylation is enhanced by the presence of an additional cis element composed of three AUU repeats. This chain is CUGBP Elav-like family member 1 (celf1), found in Xenopus tropicalis (Western clawed frog).